Consider the following 156-residue polypeptide: 2-C-methyl-D-erythritol 2,4-cyclodiphosphate synthase (156 aa).

2 residues coordinate a divalent metal cation: D9 and H11. 4-CDP-2-C-methyl-D-erythritol 2-phosphate contacts are provided by residues 9–11 (DAH) and 36–37 (HS). Residue H44 coordinates a divalent metal cation. 58 to 60 (NIG) contributes to the 4-CDP-2-C-methyl-D-erythritol 2-phosphate binding site.

Belongs to the IspF family. Homotrimer. A divalent metal cation is required as a cofactor.

The enzyme catalyses 4-CDP-2-C-methyl-D-erythritol 2-phosphate = 2-C-methyl-D-erythritol 2,4-cyclic diphosphate + CMP. It participates in isoprenoid biosynthesis; isopentenyl diphosphate biosynthesis via DXP pathway; isopentenyl diphosphate from 1-deoxy-D-xylulose 5-phosphate: step 4/6. Its function is as follows. Involved in the biosynthesis of isopentenyl diphosphate (IPP) and dimethylallyl diphosphate (DMAPP), two major building blocks of isoprenoid compounds. Catalyzes the conversion of 4-diphosphocytidyl-2-C-methyl-D-erythritol 2-phosphate (CDP-ME2P) to 2-C-methyl-D-erythritol 2,4-cyclodiphosphate (ME-CPP) with a corresponding release of cytidine 5-monophosphate (CMP). This chain is 2-C-methyl-D-erythritol 2,4-cyclodiphosphate synthase, found in Kosmotoga olearia (strain ATCC BAA-1733 / DSM 21960 / TBF 19.5.1).